Consider the following 203-residue polypeptide: Large ribosomal subunit protein uL13 (203 aa).

An N-acetylalanine modification is found at A2. R59 carries the citrulline modification. A Phosphoserine modification is found at S77. Citrulline is present on R140. At K191 the chain carries N6-acetyllysine.

The protein belongs to the universal ribosomal protein uL13 family. In terms of assembly, component of the 60S ribosome. Component of the GAIT complex. Interacts with EIF4G1. Post-translationally, phosphorylation at Ser-77 upon interferon-gamma treatment in macrophages involves a DAPK1-DAPK3 kinase cascade and is causing release from the ribosome, association with the GAIT complex and subsequent involvement in transcript-selective translation inhibition. In terms of processing, citrullinated by PADI4.

It is found in the cytoplasm. Its function is as follows. Associated with ribosomes but is not required for canonical ribosome function and has extra-ribosomal functions. Component of the GAIT (gamma interferon-activated inhibitor of translation) complex which mediates interferon-gamma-induced transcript-selective translation inhibition in inflammation processes. Upon interferon-gamma activation and subsequent phosphorylation dissociates from the ribosome and assembles into the GAIT complex which binds to stem loop-containing GAIT elements in the 3'-UTR of diverse inflammatory mRNAs (such as ceruplasmin) and suppresses their translation. In the GAIT complex interacts with m7G cap-bound eIF4G at or near the eIF3-binding site and blocks the recruitment of the 43S ribosomal complex. Involved in methylation of rRNA. This is Large ribosomal subunit protein uL13 (RPL13A) from Canis lupus familiaris (Dog).